Reading from the N-terminus, the 420-residue chain is Glutamyl-tRNA reductase (420 aa).

Substrate is bound by residues 49-52, Ser-109, 114-116, and Gln-120; these read TCNR and EPQ. Cys-50 acts as the Nucleophile in catalysis. Residue 189 to 194 participates in NADP(+) binding; the sequence is GAGETI.

It belongs to the glutamyl-tRNA reductase family. As to quaternary structure, homodimer.

The enzyme catalyses (S)-4-amino-5-oxopentanoate + tRNA(Glu) + NADP(+) = L-glutamyl-tRNA(Glu) + NADPH + H(+). It participates in porphyrin-containing compound metabolism; protoporphyrin-IX biosynthesis; 5-aminolevulinate from L-glutamyl-tRNA(Glu): step 1/2. Catalyzes the NADPH-dependent reduction of glutamyl-tRNA(Glu) to glutamate 1-semialdehyde (GSA). The sequence is that of Glutamyl-tRNA reductase from Yersinia pseudotuberculosis serotype O:1b (strain IP 31758).